The chain runs to 1328 residues: Myb-binding protein 1A (1328 aa).

The disordered stretch occupies residues 1–22 (MESRDPAQPMSPGEATQSGARP). Residues 1–582 (MESRDPAQPM…WDRMLQTLKE (582 aa)) form an interaction with MYB region. The residue at position 11 (serine 11) is a Phosphoserine. Lysine 71 and lysine 158 each carry N6-acetyllysine. 2 short sequence motifs (nuclear export signal) span residues 240-258 (SDENVPRLVNVLKMAASSV) and 263-281 (KLPAIALDLLRLALKEDKF). Positions 698–753 (SEDENDRVVVTDDSDERRLKGAEDKSEEGEDNRSSESEEESEGEESEEEERDGDVD) are disordered. Over residues 703 to 721 (DRVVVTDDSDERRLKGAED) the composition is skewed to basic and acidic residues. Residues 734–752 (SEEESEGEESEEEERDGDV) are compositionally biased toward acidic residues. Serine 775 is subject to Phosphoserine. Positions 1146–1292 (RPKLEKKDAK…KKGVLGKSPL (147 aa)) are disordered. A compositionally biased stretch (basic and acidic residues) spans 1147–1156 (PKLEKKDAKE). A Glycyl lysine isopeptide (Lys-Gly) (interchain with G-Cter in SUMO2) cross-link involves residue lysine 1148. Residues 1151–1328 (KKDAKEIPSA…KAQVRKAGKP (178 aa)) form a required for nuclear and nucleolar localization region. 2 positions are modified to phosphoserine: serine 1159 and serine 1163. Basic residues predominate over residues 1166-1184 (SKKRKKKGFLPETKKRKKR). Serine 1186 is subject to Phosphoserine. Phosphothreonine occurs at positions 1190 and 1196. At serine 1207 the chain carries Phosphoserine. Positions 1209 to 1218 (GRKKRNRTKA) are enriched in basic residues. Phosphoserine is present on serine 1232. The residue at position 1239 (threonine 1239) is a Phosphothreonine. The residue at position 1241 (serine 1241) is a Phosphoserine. Residue threonine 1244 is modified to Phosphothreonine. A phosphoserine mark is found at serine 1248 and serine 1267. A Phosphothreonine modification is found at threonine 1269. Serine 1290 and serine 1303 each carry phosphoserine. Positions 1306-1328 (IRSPSLLQSGAKKKAQVRKAGKP) are disordered. Arginine 1307 bears the Citrulline mark. 3 positions are modified to phosphoserine: serine 1308, serine 1310, and serine 1314. The span at 1316 to 1328 (AKKKAQVRKAGKP) shows a compositional bias: basic residues.

The protein belongs to the MYBBP1A family. In terms of assembly, binds to and represses JUN and MYB via the leucine zipper regions present in these proteins. Also binds to and represses PPARGC1A: this interaction is abrogated when PPARGC1A is phosphorylated by MAPK1/ERK. Binds to and stimulates transcription by AHR. Binds to KPNA2. Interacts with CLOCK and CRY1. Component of the B-WICH complex, at least composed of SMARCA5/SNF2H, BAZ1B/WSTF, SF3B1, DEK, MYO1C, ERCC6, MYBBP1A and DDX21. Post-translationally, citrullinated by PADI4.

It localises to the cytoplasm. The protein resides in the nucleus. Its subcellular location is the nucleolus. In terms of biological role, may activate or repress transcription via interactions with sequence specific DNA-binding proteins. Repression may be mediated at least in part by histone deacetylase activity (HDAC activity). Acts as a corepressor and in concert with CRY1, represses the transcription of the core circadian clock component PER2. Preferentially binds to dimethylated histone H3 'Lys-9' (H3K9me2) on the PER2 promoter. Has a role in rRNA biogenesis together with PWP1. The protein is Myb-binding protein 1A (MYBBP1A) of Homo sapiens (Human).